We begin with the raw amino-acid sequence, 253 residues long: Phosphoadenosine 5'-phosphosulfate reductase (253 aa).

Cys239 (nucleophile; cysteine thiosulfonate intermediate) is an active-site residue.

The protein belongs to the PAPS reductase family. CysH subfamily.

The protein localises to the cytoplasm. The enzyme catalyses [thioredoxin]-disulfide + sulfite + adenosine 3',5'-bisphosphate + 2 H(+) = [thioredoxin]-dithiol + 3'-phosphoadenylyl sulfate. The protein operates within sulfur metabolism; hydrogen sulfide biosynthesis; sulfite from sulfate: step 3/3. Its function is as follows. Catalyzes the formation of sulfite from phosphoadenosine 5'-phosphosulfate (PAPS) using thioredoxin as an electron donor. In Aliivibrio salmonicida (strain LFI1238) (Vibrio salmonicida (strain LFI1238)), this protein is Phosphoadenosine 5'-phosphosulfate reductase.